We begin with the raw amino-acid sequence, 182 residues long: ATP-dependent protease subunit HslV (182 aa).

The active site involves Thr12. Residues Ala167, Cys170, and Thr173 each coordinate Na(+).

This sequence belongs to the peptidase T1B family. HslV subfamily. In terms of assembly, a double ring-shaped homohexamer of HslV is capped on each side by a ring-shaped HslU homohexamer. The assembly of the HslU/HslV complex is dependent on binding of ATP.

It localises to the cytoplasm. It carries out the reaction ATP-dependent cleavage of peptide bonds with broad specificity.. Its activity is regulated as follows. Allosterically activated by HslU binding. Its function is as follows. Protease subunit of a proteasome-like degradation complex believed to be a general protein degrading machinery. In Chlorobium phaeobacteroides (strain BS1), this protein is ATP-dependent protease subunit HslV.